A 435-amino-acid polypeptide reads, in one-letter code: Apparent malate synthase (435 aa).

2 residues coordinate Mg(2+): Glu-159 and Asn-180. Substrate is bound at residue Glu-159.

Belongs to the HpcH/HpaI aldolase family. The cofactor is Mg(2+). Mn(2+) is required as a cofactor. Requires Co(2+) as cofactor. It depends on Ca(2+) as a cofactor.

The catalysed reaction is (S)-malyl-CoA = glyoxylate + acetyl-CoA. It carries out the reaction (S)-malyl-CoA + H2O = (S)-malate + CoA + H(+). Functionally, involved in the methylaspartate cycle. Catalyzes the biosynthesis of malate in two steps. In the first reaction acetyl-CoA is condensed reversibly with glyoxylate to form (S)-malyl-CoA. In the second reaction (S)-malyl-CoA is hydrolyzed to malate and CoA. It can also catalyze the condensation of propionyl-CoA with glyoxylate and of acetyl-CoA with pyruvate, however the CoA-ester hydrolysis reaction is highly specific for (S)-malyl-CoA. The chain is Apparent malate synthase (aceB) from Haloarcula marismortui (strain ATCC 43049 / DSM 3752 / JCM 8966 / VKM B-1809) (Halobacterium marismortui).